We begin with the raw amino-acid sequence, 184 residues long: UPF0149 protein PSEEN5316 (184 aa).

Belongs to the UPF0149 family.

This chain is UPF0149 protein PSEEN5316, found in Pseudomonas entomophila (strain L48).